Reading from the N-terminus, the 4644-residue chain is Cytoplasmic dynein 1 heavy chain 1 (4644 aa).

Residue serine 2 is modified to N-acetylserine. The tract at residues 2-1865 (SEPGGGEDGS…SIQMANAKFN (1864 aa)) is stem. 4 coiled-coil regions span residues 48 to 69 (AALE…FLSD), 179 to 200 (SVEK…NIEI), 453 to 476 (AHRK…QLRA), and 541 to 564 (TEAW…RITA). Serine 68 bears the Phosphoserine mark. Residues 446-701 (MVWRINPAHR…NTQEIFDDWA (256 aa)) are interaction with DYNC1I2. The segment at 649 to 800 (AKQIDRQLTA…EKVEERNTIS (152 aa)) is interaction with DYNC1LI2. Lysine 1123 is subject to N6-acetyllysine. Positions 1169 to 1201 (TYVQSLKRKIKQFEKQVELYRNGQRLLEKQRFQ) form a coiled coil. Phosphoserine is present on serine 1228. Coiled-coil stretches lie at residues 1229–1250 (AIQQ…AVES) and 1355–1371 (RKLR…LKNF). AAA regions lie at residues 1866 to 2097 (YGFE…VLVS), 2178 to 2450 (EELK…LTRL), 2554 to 2803 (EVET…WVRG), and 2897 to 3166 (VFYE…GGRT). ATP contacts are provided by residues 1904–1911 (GPAGTGKT) and 2222–2229 (GPSGSGKS). The disordered stretch occupies residues 2388–2408 (GEDEAQRRRKGKEDEGEEAAS). ATP is bound by residues 2593–2600 (GPPGSGKT) and 2935–2942 (GVSGAGKT). 3 coiled-coil regions span residues 3187–3273 (EKRS…ADKQ), 3394–3498 (AIAQ…KNQM), and 3735–3798 (EFQL…VSQQ). Residues 3187-3498 (EKRSELEEQQ…KTSETFKNQM (312 aa)) form a stalk region. Lysine 3478 carries the post-translational modification N6-acetyllysine. 2 AAA regions span residues 3551 to 3780 (LSNA…EVTR) and 4003 to 4219 (AHMF…TVDT). A Phosphoserine modification is found at serine 4160. An N6-acetyllysine modification is found at lysine 4281. Threonine 4364 is subject to Phosphothreonine. Residue serine 4366 is modified to Phosphoserine.

The protein belongs to the dynein heavy chain family. In terms of assembly, homodimer. The cytoplasmic dynein 1 complex consists of two catalytic heavy chains (HCs) and a number of non-catalytic subunits presented by intermediate chains (ICs), light intermediate chains (LICs) and light chains (LCs); the composition seems to vary in respect to the IC, LIC and LC composition. The heavy chain homodimer serves as a scaffold for the probable homodimeric assembly of the respective non-catalytic subunits. The ICs and LICs bind directly to the HC dimer and dynein LCs assemble on the IC dimer. Interacts with DYNC1LI1; DYNC1LI1 and DYNC1LI2 bind mutually exclusive to DYNC1H1. Interacts with DYNC1LI2; DYNC1LI1 and DYNC1LI2 bind mutually exclusive to DYNC1H1. Interacts with DYNC1I2. Interacts with BICD2. Interacts with DNALI1.

It localises to the cytoplasm. The protein localises to the cytoskeleton. In terms of biological role, cytoplasmic dynein 1 acts as a motor for the intracellular retrograde motility of vesicles and organelles along microtubules. Dynein has ATPase activity; the force-producing power stroke is thought to occur on release of ADP. Plays a role in mitotic spindle assembly and metaphase plate congression. In Mus musculus (Mouse), this protein is Cytoplasmic dynein 1 heavy chain 1 (Dync1h1).